The following is a 524-amino-acid chain: Chromosomal replication initiator protein DnaA (524 aa).

Residues 1–72 form a domain I, interacts with DnaA modulators region; the sequence is MNDFWQHCSA…DLARDFWNAP (72 aa). A domain II region spans residues 72 to 187; it reads PIEVQFVLDP…GEADSMYERS (116 aa). Residues 188 to 404 form a domain III, AAA+ region region; it reads KLNPVLTFDN…GALRKILAYS (217 aa). Positions 232, 234, 235, and 236 each coordinate ATP. The tract at residues 405-524 is domain IV, binds dsDNA; that stretch reads KFHGREISIE…LHVLEQTLKG (120 aa).

It belongs to the DnaA family. Oligomerizes as a right-handed, spiral filament on DNA at oriC.

The protein localises to the cytoplasm. Functionally, plays an essential role in the initiation and regulation of chromosomal replication. ATP-DnaA binds to the origin of replication (oriC) to initiate formation of the DNA replication initiation complex once per cell cycle. Binds the DnaA box (a 9 base pair repeat at the origin) and separates the double-stranded (ds)DNA. Forms a right-handed helical filament on oriC DNA; dsDNA binds to the exterior of the filament while single-stranded (ss)DNA is stabiized in the filament's interior. The ATP-DnaA-oriC complex binds and stabilizes one strand of the AT-rich DNA unwinding element (DUE), permitting loading of DNA polymerase. After initiation quickly degrades to an ADP-DnaA complex that is not apt for DNA replication. Binds acidic phospholipids. The sequence is that of Chromosomal replication initiator protein DnaA from Burkholderia multivorans (strain ATCC 17616 / 249).